A 393-amino-acid polypeptide reads, in one-letter code: MSIKTVKDFNSFAGKRALVRCDFNVPLKEGNISDDTRIKAALPTIEYLKEKGARIVLISHLGRPEGKKNLKYSLKPVANKLSELLGQDVKMLSDCIGREIVNNTLQMKDGDVVLLENVRFYAEEEKNDKNFAKKLSENGDVFVNDAFGAAHRAHASTVGVSDYLPSVGGFLMEKEDKFLGEVLKNPERPFVSIIGGSKVSSKIAVLESLLSKSNVVVIGGGMAYTFLHSKGYSIGKSLLESEYIDIASSFLKKAKELDVKVILPLDHIVADDFNKNSTPEYIDSFDIPENKIGMDVGGKTLKEIEKVIKTAKTIIWNGPLGVFEFDSFSKGTAMVAEMVASCAGLTIVGGGDSVAAVNKFNLSDKITHVSTGGGASLEYLEGKILPGIKVLEK.

Residues 22–24 (DFN), Arg37, 60–63 (HLGR), Arg119, and Arg152 contribute to the substrate site. Residues Lys202, Gly293, Glu324, and 350 to 353 (GGDS) each bind ATP.

It belongs to the phosphoglycerate kinase family. In terms of assembly, monomer.

It is found in the cytoplasm. It carries out the reaction (2R)-3-phosphoglycerate + ATP = (2R)-3-phospho-glyceroyl phosphate + ADP. It participates in carbohydrate degradation; glycolysis; pyruvate from D-glyceraldehyde 3-phosphate: step 2/5. This chain is Phosphoglycerate kinase, found in Borrelia garinii subsp. bavariensis (strain ATCC BAA-2496 / DSM 23469 / PBi) (Borreliella bavariensis).